A 425-amino-acid polypeptide reads, in one-letter code: Polyadenylate-binding protein RBP47B' (425 aa).

RRM domains are found at residues 24 to 102 (RTLW…LNWA), 116 to 195 (HSIF…AATP), and 237 to 309 (TTIS…WSKN).

It belongs to the polyadenylate-binding RBP47 family. As to quaternary structure, interacts with the poly(A) tail of mRNA in nucleus.

The protein localises to the nucleus. It is found in the cytoplasmic granule. Its function is as follows. Heterogeneous nuclear ribonucleoprotein (hnRNP)-protein binding the poly(A) tail of mRNA and probably involved in some steps of pre-mRNA maturation. This Arabidopsis thaliana (Mouse-ear cress) protein is Polyadenylate-binding protein RBP47B' (RBP47B').